A 295-amino-acid chain; its full sequence is Alpha-1A adrenergic receptor (295 aa).

Residues M1–I27 are Extracellular-facing. 3 N-linked (GlcNAc...) asparagine glycosylation sites follow: N7, N13, and N22. Residues L28 to V51 form a helical membrane-spanning segment. The Cytoplasmic portion of the chain corresponds to A52–Y64. Residues I65–I88 form a helical membrane-spanning segment. Residues L89–C99 are Extracellular-facing. Residues C99 and C176 are joined by a disulfide bond. The chain crosses the membrane as a helical span at residues N100–I122. The Cytoplasmic portion of the chain corresponds to D123–G143. Residues L144–Q167 form a helical membrane-spanning segment. The Extracellular segment spans residues P168–E181. Residues P182–C205 traverse the membrane as a helical segment. Over R206–T273 the chain is Cytoplasmic. S215 is subject to Phosphoserine; by PKA. The helical transmembrane segment at L274–G295 threads the bilayer.

The protein belongs to the G-protein coupled receptor 1 family. Adrenergic receptor subfamily. ADRA1A sub-subfamily. Homo- and heterooligomer. Heterooligomerizes with ADRA1B homooligomers in cardiac myocytes. Interacts with CAVIN4.

The protein resides in the nucleus membrane. Its subcellular location is the cell membrane. The protein localises to the cytoplasm. It localises to the membrane. It is found in the caveola. In terms of biological role, this alpha-adrenergic receptor mediates its action by association with G proteins that activate a phosphatidylinositol-calcium second messenger system. Its effect is mediated by G(q) and G(11) proteins. Nuclear ADRA1A-ADRA1B heterooligomers regulate phenylephrine (PE)-stimulated ERK signaling in cardiac myocytes. The protein is Alpha-1A adrenergic receptor (ADRA1A) of Canis lupus familiaris (Dog).